The chain runs to 525 residues: G patch domain-containing protein 3 (525 aa).

The disordered stretch occupies residues 264–316; that stretch reads YLADIPASPCGEPEEEVGKEEEEESHSDEDDDRGEEWERHEALHEDVTGQERT. Over residues 275-298 the composition is skewed to acidic residues; the sequence is EPEEEVGKEEEEESHSDEDDDRGE. The segment covering 299 to 316 has biased composition (basic and acidic residues); the sequence is EWERHEALHEDVTGQERT. One can recognise a G-patch domain in the interval 410-458; the sequence is TKGIGRKVMERQGWAEGQGLGCRCSGVPEALDSDGQHPRCKRGLGYHGE.

In terms of assembly, interacts with mitochondrial MAVS; the interaction is markedly increased upon viral infection. As to expression, expressed in ocular tissues including retinal pigment epithelium, cornea, ciliary muscle and non-pigmented ciliary epithelium. Also expressed in optic nerve, cartilage, skin and lymph node.

It localises to the nucleus. The protein localises to the cytoplasm. Involved in transcriptional regulation. It is able to activate transcription from the CXCR4 promoter and therefore it might control neural crest cell migration involved in ocular and craniofacial development. Is a negative regulator of immune antiviral response, acting via down-regulation of RIG-I-like receptors signaling and inhibition of type I interferon production. The control mechanism involves interaction with mitochondrial MAVS and inhibition of MAVS assembly with downstream proteins implicated in antiviral response, such as TBK1 and TRAF6. The sequence is that of G patch domain-containing protein 3 (GPATCH3) from Homo sapiens (Human).